A 179-amino-acid polypeptide reads, in one-letter code: Inner membrane-spanning protein YciB (179 aa).

5 helical membrane passes run 22–42 (IYAA…YSWV), 50–70 (MALI…FFHN), 76–96 (WKVT…QWVM), 121–141 (LAWA…AFWL), and 149–169 (FKVF…GVYI).

It belongs to the YciB family.

Its subcellular location is the cell inner membrane. Plays a role in cell envelope biogenesis, maintenance of cell envelope integrity and membrane homeostasis. The polypeptide is Inner membrane-spanning protein YciB (Salmonella agona (strain SL483)).